The sequence spans 208 residues: Small ribosomal subunit protein uS4 (208 aa).

Residues 95–155 enclose the S4 RNA-binding domain; that stretch reads TRLDALVLRA…AKSQTMVPFQ (61 aa).

This sequence belongs to the universal ribosomal protein uS4 family. Part of the 30S ribosomal subunit. Contacts protein S5. The interaction surface between S4 and S5 is involved in control of translational fidelity.

Functionally, one of the primary rRNA binding proteins, it binds directly to 16S rRNA where it nucleates assembly of the body of the 30S subunit. With S5 and S12 plays an important role in translational accuracy. This is Small ribosomal subunit protein uS4 from Bifidobacterium adolescentis (strain ATCC 15703 / DSM 20083 / NCTC 11814 / E194a).